The sequence spans 321 residues: Tyrosine recombinase XerC (321 aa).

The Core-binding (CB) domain occupies Ser-16–Glu-107. A Tyr recombinase domain is found at Ser-128–Arg-315. Residues Arg-173, Lys-199, His-267, Arg-270, and His-293 contribute to the active site. Catalysis depends on Tyr-302, which acts as the O-(3'-phospho-DNA)-tyrosine intermediate.

This sequence belongs to the 'phage' integrase family. XerC subfamily. As to quaternary structure, forms a cyclic heterotetrameric complex composed of two molecules of XerC and two molecules of XerD.

Its subcellular location is the cytoplasm. Site-specific tyrosine recombinase, which acts by catalyzing the cutting and rejoining of the recombining DNA molecules. The XerC-XerD complex is essential to convert dimers of the bacterial chromosome into monomers to permit their segregation at cell division. It also contributes to the segregational stability of plasmids. This is Tyrosine recombinase XerC from Nitrobacter winogradskyi (strain ATCC 25391 / DSM 10237 / CIP 104748 / NCIMB 11846 / Nb-255).